We begin with the raw amino-acid sequence, 694 residues long: Voltage-gated chloride channel TMC4 (694 aa).

The tract at residues 1–21 (MEAWGQSPACSSSRKARTGPS) is disordered. The Extracellular segment spans residues 1-150 (MEAWGQSPAC…GTESYFSLLR (150 aa)). A helical transmembrane segment spans residues 151–171 (FLLFLNLVASVIEICMKLIPT). Residues 172–231 (WLEGAPPGPPGPNISSPCGSYIPHTHGLVAFPTQLFNLLSGEGYLEWSPLFYGFYPPRSN) lie on the Cytoplasmic side of the membrane. Residues 232 to 252 (LAITYLCSVFAISVIYLLCIL) traverse the membrane as a helical segment. Residues 253–330 (RRSVSGLKET…SQRAKVWSMR (78 aa)) are Extracellular-facing. Residues 331-351 (ALLNVLVLALLGAAFYGIYWA) traverse the membrane as a helical segment. At 352–376 (TEYTLTLQETPLVRQTPLFKLLVDY) the chain is on the cytoplasmic side. The helical transmembrane segment at 377–397 (LPSIFISLFNFVLPPVFKFIA) threads the bilayer. Residues 398–407 (SLEGYTQSRQ) are Extracellular-facing. A helical membrane pass occupies residues 408–428 (IVLILLRTVFLRLASLVFLLV). The Cytoplasmic segment spans residues 429–465 (SLWSQITCGGNMEAEGCKACGYNYKEIPCWETRLGQE). A helical transmembrane segment spans residues 466–486 (MYKLVLFDLLMGLLVTLLVQF). At 487-513 (PRKILCGLCPGALGRLSGTLEFQVPDE) the chain is on the extracellular side. Residues 514 to 534 (VLGLIYAQTVVWVGSFFCPLL) traverse the membrane as a helical segment. A topological domain (cytoplasmic) is located at residue proline 535. The chain crosses the membrane as a helical span at residues 536 to 556 (LINTAKFLILFCLKKITLFSI). Residues 557 to 574 (YSPASRTFRASTANFFFP) lie on the Extracellular side of the membrane. Residues 575–595 (LVLLVGLAISAVPVLYSIFLI) traverse the membrane as a helical segment. At 596–635 (PPSKLCGPFRGKLSIWAQIPEAIESLPQTAQNFLYFLGTQ) the chain is on the cytoplasmic side. A helical transmembrane segment spans residues 636 to 656 (AFTVPLLILSSILMMYTVALA). Over 657-694 (NCYGRLISELKRQIETEVQNKVFLAQRAVALSSRNGTS) the chain is Extracellular. An N-linked (GlcNAc...) asparagine glycan is attached at asparagine 691.

This sequence belongs to the TMC family. Expressed in taste bud cells of the posterior tongue. Ubiquitously expressed.

It localises to the membrane. The enzyme catalyses chloride(in) = chloride(out). Functionally, voltage-gated chloride channel involved in high-concentration salt taste sensation. Depolarization induced by high NaCl concentration may trigger the activation of TMC4-mediated chloride influx into taste bud cells, helping the return to resting potential. Also allows permeation of organic anions including gluconate, but their current amplitudes at positive potentials are less than that of chloride. Involved in pH and temperature-dependent modulation of salty taste. The sequence is that of Voltage-gated chloride channel TMC4 from Mus musculus (Mouse).